Here is a 79-residue protein sequence, read N- to C-terminus: Small ribosomal subunit protein bS16 (79 aa).

This sequence belongs to the bacterial ribosomal protein bS16 family.

This is Small ribosomal subunit protein bS16 from Marinobacter nauticus (strain ATCC 700491 / DSM 11845 / VT8) (Marinobacter aquaeolei).